The following is a 240-amino-acid chain: ATP-dependent dethiobiotin synthetase BioD (240 aa).

15–20 serves as a coordination point for ATP; that stretch reads EIGKTF. Mg(2+) is bound at residue Thr19. The active site involves Lys40. Residues Asp57, 118-121, and 178-179 each bind ATP; these read EGVG and NR. Residues Asp57 and Glu118 each contribute to the Mg(2+) site.

This sequence belongs to the dethiobiotin synthetase family. As to quaternary structure, homodimer. Mg(2+) is required as a cofactor.

Its subcellular location is the cytoplasm. The enzyme catalyses (7R,8S)-7,8-diammoniononanoate + CO2 + ATP = (4R,5S)-dethiobiotin + ADP + phosphate + 3 H(+). Its pathway is cofactor biosynthesis; biotin biosynthesis; biotin from 7,8-diaminononanoate: step 1/2. Functionally, catalyzes a mechanistically unusual reaction, the ATP-dependent insertion of CO2 between the N7 and N8 nitrogen atoms of 7,8-diaminopelargonic acid (DAPA, also called 7,8-diammoniononanoate) to form a ureido ring. The sequence is that of ATP-dependent dethiobiotin synthetase BioD from Burkholderia pseudomallei (strain 1106a).